A 1181-amino-acid polypeptide reads, in one-letter code: WD repeat-containing protein 35 (1181 aa).

WD repeat units lie at residues 4–43 (YLSK…VLKL), 61–100 (LSMN…VWML), 105–143 (WIEE…IVGS), 147–185 (NRIW…IYDN), 193–241 (MKLS…IMRH), and 246–288 (NPVL…IVQF).

In terms of assembly, component of the IFT complex A (IFT-A) complex. IFT-A complex is divided into a core subcomplex composed of IFT122:IFT140:WDR19 which is associated with TULP3 and a peripheral subcomplex composed of IFT43:WDR35:TTC21B. Interacts directy with IFT122, ITF43 and TTC21B. Interacts with IFT43. Interacts with CFAP61.

It localises to the cytoplasm. The protein localises to the cytoskeleton. Its subcellular location is the microtubule organizing center. It is found in the centrosome. The protein resides in the cilium axoneme. It localises to the cilium basal body. As a component of the IFT complex A (IFT-A), a complex required for retrograde ciliary transport and entry into cilia of G protein-coupled receptors (GPCRs), it is involved in ciliogenesis and ciliary protein trafficking. May promote CASP3 activation and TNF-stimulated apoptosis. This is WD repeat-containing protein 35 from Homo sapiens (Human).